Here is a 255-residue protein sequence, read N- to C-terminus: Polycomb group RING finger protein 5 (255 aa).

The RING-type zinc-finger motif lies at 18-57; the sequence is CYICKGYLIKPTTVTECLHTFCKTCIVQHFEDSNDCPRCG. The tract at residues 97–132 is disordered; sequence WKKNKPQENGQDDMSKVDKPKVDEEGDENQDDKDYH. A compositionally biased stretch (basic and acidic residues) spans 109 to 119; that stretch reads DMSKVDKPKVD.

Component of a PRC1-like complex that contains PCGF5, RNF2 and UBE2D3. Interacts with RNF2; the interaction is direct. Interacts with CBX6, CBX7 and CBX8. Interacts with AUTS2; the interaction is direct. Identified in a complex that contains AUTS2, PCGF5, CSNK2B and RNF2.

It is found in the nucleus. It localises to the nucleoplasm. Functionally, component of a Polycomb group (PcG) multiprotein PRC1-like complex, a complex class required to maintain the transcriptionally repressive state of many genes, including Hox genes, throughout development. PcG PRC1 complex acts via chromatin remodeling and modification of histones; it mediates monoubiquitination of histone H2A 'Lys-119', rendering chromatin heritably changed in its expressibility. Within the PRC1-like complex, regulates RNF2 ubiquitin ligase activity. Plays a redundant role with PCGF3 as part of a PRC1-like complex that mediates monoubiquitination of histone H2A 'Lys-119' on the X chromosome and is required for normal silencing of one copy of the X chromosome in XX females. The protein is Polycomb group RING finger protein 5 (PCGF5) of Bos taurus (Bovine).